Consider the following 224-residue polypeptide: Peptidyl-prolyl cis-trans isomerase CYP21-1 (224 aa).

The signal sequence occupies residues 1–27 (MRREISFLLQPRCLLLLVALTIFLVFA). One can recognise a PPIase cyclophilin-type domain in the interval 50 to 214 (FLDVDIDGQR…KKVVIADSGE (165 aa)). Residue Asn158 is glycosylated (N-linked (GlcNAc...) asparagine).

Belongs to the cyclophilin-type PPIase family. In terms of tissue distribution, ubiquitous.

It is found in the endoplasmic reticulum. The enzyme catalyses [protein]-peptidylproline (omega=180) = [protein]-peptidylproline (omega=0). PPIases accelerate the folding of proteins. It catalyzes the cis-trans isomerization of proline imidic peptide bonds in oligopeptides. In Arabidopsis thaliana (Mouse-ear cress), this protein is Peptidyl-prolyl cis-trans isomerase CYP21-1 (CYP21-1).